The chain runs to 180 residues: Protein PHLOEM PROTEIN 2-LIKE A9 (180 aa).

The disordered stretch occupies residues 1 to 21 (MSSQKSSHHKADSKMEQDNNR). Positions 9–21 (HKADSKMEQDNNR) are enriched in basic and acidic residues.

This Arabidopsis thaliana (Mouse-ear cress) protein is Protein PHLOEM PROTEIN 2-LIKE A9 (PP2A9).